The sequence spans 279 residues: uncharacterized protein (279 aa).

A compositionally biased stretch (low complexity) spans 1 to 29 (MSSRYTSSYTPSSRYGSGWDYSSSYSSSR). Disordered stretches follow at residues 1–111 (MSSR…APRE) and 137–233 (LTLA…AEAL). Basic and acidic residues predominate over residues 30 to 44 (TSRDRDTGSYRDRDY). Residues 45-59 (SSTSYTSTRPRYSTY) are compositionally biased toward low complexity. Acidic residues predominate over residues 142 to 153 (EPEESEEEEDDE). Residues 170-186 (ESSPVSSPVKEVSSAAS) show a composition bias toward low complexity. The segment covering 189–205 (ANDNGNETENRTPSPTV) has biased composition (polar residues). The span at 221 to 233 (SDVKKEGGDAEAL) shows a compositional bias: basic and acidic residues.

This is an uncharacterized protein from Caenorhabditis elegans.